A 1345-amino-acid polypeptide reads, in one-letter code: Aldehyde oxidase 2 (1345 aa).

The 2Fe-2S ferredoxin-type domain maps to 9–96 (DDLEFFVNGR…GAAVTTVEGV (88 aa)). Residues cysteine 48, cysteine 53, cysteine 56, and cysteine 78 each coordinate [2Fe-2S] cluster. Residue glutamine 117 participates in Mo-molybdopterin binding. [2Fe-2S] cluster contacts are provided by cysteine 118, cysteine 121, cysteine 153, and cysteine 155. Cysteine 155 is a Mo-molybdopterin binding site. One can recognise an FAD-binding PCMH-type domain in the interval 238–423 (FYGERITWIA…GSVYIPHSQK (186 aa)). Residues 266-273 (LISGNTAL), alanine 347, serine 356, histidine 360, aspartate 369, and leucine 413 each bind FAD. Mo-molybdopterin-binding positions include 812-813 (GF), 1094-1097 (ASVG), glutamine 1209, and leucine 1274. Catalysis depends on glutamate 1276, which acts as the Proton acceptor; for azaheterocycle hydroxylase activity.

This sequence belongs to the xanthine dehydrogenase family. Homodimer. The cofactor is [2Fe-2S] cluster. FAD serves as cofactor. Mo-molybdopterin is required as a cofactor. As to expression, expressed in olfactory mucosa epithelium (at protein level). Detected in skin.

Its subcellular location is the cytoplasm. It catalyses the reaction an aldehyde + O2 + H2O = a carboxylate + H2O2 + H(+). In terms of biological role, oxidase with broad substrate specificity, oxidizing aromatic azaheterocycles, such as phthalazine, as well as aldehydes, such as benzaldehyde and retinal. Cannot use hypoxanthine as substrate. This is Aldehyde oxidase 2 (Aox2) from Mus musculus (Mouse).